The primary structure comprises 466 residues: mRNA-capping enzyme subunit alpha (466 aa).

Lysine 67 functions as the N6-GMP-lysine intermediate in the catalytic mechanism. Residues 408-466 are disordered; the sequence is REQGLKNAQKQFNHQASARSSLSQQHSTEPEQSQDQPKYVDDDDDNWSDDEPDTKRQKI. Polar residues predominate over residues 413 to 443; the sequence is KNAQKQFNHQASARSSLSQQHSTEPEQSQDQ. Positions 448–459 are enriched in acidic residues; it reads DDDDDNWSDDEP.

The protein belongs to the eukaryotic GTase family. Heterodimer. The mRNA-capping enzyme is composed of two separate chains alpha and beta, respectively a mRNA guanylyltransferase and an mRNA 5'-triphosphate monophosphatase.

It localises to the nucleus. The catalysed reaction is a 5'-end diphospho-ribonucleoside in mRNA + GTP + H(+) = a 5'-end (5'-triphosphoguanosine)-ribonucleoside in mRNA + diphosphate. Its function is as follows. Second step of mRNA capping. Transfer of the GMP moiety of GTP to the 5'-end of RNA via an enzyme-GMP covalent reaction intermediate. This chain is mRNA-capping enzyme subunit alpha (CEG1), found in Kluyveromyces lactis (strain ATCC 8585 / CBS 2359 / DSM 70799 / NBRC 1267 / NRRL Y-1140 / WM37) (Yeast).